Consider the following 172-residue polypeptide: Small ribosomal subunit protein uS5 (172 aa).

Positions 13-76 (LIEKMVAVNR…DQARRSMIKV (64 aa)) constitute an S5 DRBM domain.

Belongs to the universal ribosomal protein uS5 family. Part of the 30S ribosomal subunit. Contacts proteins S4 and S8.

In terms of biological role, with S4 and S12 plays an important role in translational accuracy. Located at the back of the 30S subunit body where it stabilizes the conformation of the head with respect to the body. In Neisseria gonorrhoeae (strain ATCC 700825 / FA 1090), this protein is Small ribosomal subunit protein uS5.